The primary structure comprises 166 residues: MKTPRLPIAIQQAVMRSLRDALARANLKLGRNYPEPKLVYQQRGTAAGTAWLESYEIRLNPVLLMENQQAFIDEVVPHELAHLLVWKHFGRVPPHGKEWKWMMESVLGVPARRTHQFELDSVRANTFPYRCRCQQHQLTIRRHNRVVRGETQYRCVRCGDTLVAEN.

A SprT-like domain is found at 19–164 (RDALARANLK…CVRCGDTLVA (146 aa)). His-78 contributes to the Zn(2+) binding site. Residue Glu-79 is part of the active site. His-82 provides a ligand contact to Zn(2+).

This sequence belongs to the SprT family. Zn(2+) is required as a cofactor.

The protein localises to the cytoplasm. This chain is Protein SprT, found in Cronobacter sakazakii (strain ATCC BAA-894) (Enterobacter sakazakii).